We begin with the raw amino-acid sequence, 150 residues long: UPF0756 membrane protein YPN_1328 (150 aa).

4 helical membrane passes run 16–36, 51–71, 88–108, and 114–134; these read ALGI…LIAI, YGLT…IASG, ILAI…VSLM, and VVAG…GVPV.

Belongs to the UPF0756 family.

Its subcellular location is the cell membrane. This Yersinia pestis bv. Antiqua (strain Nepal516) protein is UPF0756 membrane protein YPN_1328.